We begin with the raw amino-acid sequence, 380 residues long: Flap endonuclease 1 (380 aa).

The tract at residues 1-104 (MGIQGLAKLI…GELAKRSERR (104 aa)) is N-domain. At R19 the chain carries Symmetric dimethylarginine; by PRMT5. A Mg(2+)-binding site is contributed by D34. Residues R47 and R70 each contribute to the DNA site. K80 bears the N6-acetyllysine mark. Mg(2+) is bound at residue D86. R100 and R104 each carry symmetric dimethylarginine; by PRMT5. Residues 122–253 (EVEKFTKRLV…KRAVDLIQKH (132 aa)) are I-domain. Residues E158, E160, D179, and D181 each coordinate Mg(2+). Residue E158 coordinates DNA. A Phosphoserine; by CDK2 modification is found at S187. R192 bears the Symmetric dimethylarginine; by PRMT5 mark. Residue S197 is modified to Phosphoserine. 2 residues coordinate DNA: G231 and D233. A Mg(2+)-binding site is contributed by D233. Phosphoserine is present on residues S255, S293, and S335. Residue T336 is modified to Phosphothreonine. Residues 336–344 (TQGRLDDFF) are interaction with PCNA. The segment at 349-380 (SLSSAKRKEPEPKGAAKKKQRLGPAGKFKRGK) is disordered. N6-acetyllysine is present on residues K354, K375, K377, and K380. The span at 363–380 (AAKKKQRLGPAGKFKRGK) shows a compositional bias: basic residues.

Belongs to the XPG/RAD2 endonuclease family. FEN1 subfamily. As to quaternary structure, interacts with PCNA. Three molecules of FEN1 bind to one PCNA trimer with each molecule binding to one PCNA monomer. PCNA stimulates the nuclease activity without altering cleavage specificity. The C-terminal domain binds EP300; can bind simultaneously to both PCNA and EP300. Interacts with DDX11; this interaction is direct and increases flap endonuclease activity of FEN1. Interacts with WDR4; regulating its endonuclease activity. Interacts with POLB. The cofactor is Mg(2+). Acetylated by EP300. Acetylation inhibits both endonuclease and exonuclease activity. Acetylation also reduces DNA-binding activity but does not affect interaction with PCNA or EP300. In terms of processing, phosphorylation upon DNA damage induces relocalization to the nuclear plasma. Phosphorylation at Ser-187 by CDK2 occurs during late S-phase and results in dissociation from PCNA. Post-translationally, methylation at Arg-192 by PRMT5 impedes Ser-187 phosphorylation and increases interaction with PCNA.

It localises to the nucleus. It is found in the nucleolus. The protein resides in the nucleoplasm. Its subcellular location is the mitochondrion. In terms of biological role, structure-specific nuclease with 5'-flap endonuclease and 5'-3' exonuclease activities involved in DNA replication and repair. During DNA replication, cleaves the 5'-overhanging flap structure that is generated by displacement synthesis when DNA polymerase encounters the 5'-end of a downstream Okazaki fragment. It enters the flap from the 5'-end and then tracks to cleave the flap base, leaving a nick for ligation. Also involved in the long patch base excision repair (LP-BER) pathway, by cleaving within the apurinic/apyrimidinic (AP) site-terminated flap. Acts as a genome stabilization factor that prevents flaps from equilibrating into structures that lead to duplications and deletions. Also possesses 5'-3' exonuclease activity on nicked or gapped double-stranded DNA, and exhibits RNase H activity. Also involved in replication and repair of rDNA and in repairing mitochondrial DNA. This chain is Flap endonuclease 1, found in Ovis aries (Sheep).